The sequence spans 55 residues: Large ribosomal subunit protein bL33 (55 aa).

The protein belongs to the bacterial ribosomal protein bL33 family.

The chain is Large ribosomal subunit protein bL33 from Rhizobium meliloti (strain 1021) (Ensifer meliloti).